Reading from the N-terminus, the 186-residue chain is Casparian strip membrane protein 5 (186 aa).

Topologically, residues 1–23 (MEHGEISSKAPLVAPVAAGVNRA) are cytoplasmic. The helical transmembrane segment at 24-44 (VAVVDTFLRFIAIIGTIGSAI) threads the bilayer. Over 45–73 (AMGTTNETLPFFTQFIQFEAKYSDLPSFT) the chain is Extracellular. Asparagine 50 is a glycosylation site (N-linked (GlcNAc...) asparagine). A helical membrane pass occupies residues 74–94 (FFVAANAVVCTYLVLSIPLSI). Over 95-106 (VHILRPRARYSR) the chain is Cytoplasmic. A helical membrane pass occupies residues 107-127 (LFLVFFDTAMLALLTAGASAA). Topologically, residues 128–160 (AAIVYLAHKGNVRANWFSICQQFDSFCERISGS) are extracellular. The chain crosses the membrane as a helical span at residues 161-181 (LIGSFAAMVLLVVLITLSAFA). Residues 182 to 186 (LARRH) lie on the Cytoplasmic side of the membrane.

The protein belongs to the Casparian strip membrane proteins (CASP) family. As to quaternary structure, homodimer and heterodimers.

It localises to the cell membrane. Functionally, regulates membrane-cell wall junctions and localized cell wall deposition. Required for establishment of the Casparian strip membrane domain (CSD) and the subsequent formation of Casparian strips, a cell wall modification of the root endodermis that determines an apoplastic barrier between the intraorganismal apoplasm and the extraorganismal apoplasm and prevents lateral diffusion. The chain is Casparian strip membrane protein 5 from Oryza sativa subsp. japonica (Rice).